We begin with the raw amino-acid sequence, 343 residues long: GTPase Obg (343 aa).

One can recognise an Obg domain in the interval 1–159 (MKFIDEVKIQ…FELRLELRVL (159 aa)). The 175-residue stretch at 160–334 (ADVGLLGLPN…LIYAIMGHLQ (175 aa)) folds into the OBG-type G domain. GTP-binding positions include 166-173 (GLPNAGKS), 191-195 (FTTLY), 213-216 (DIPG), 284-287 (NKVD), and 315-317 (SAL). 2 residues coordinate Mg(2+): S173 and T193.

This sequence belongs to the TRAFAC class OBG-HflX-like GTPase superfamily. OBG GTPase family. Monomer. Mg(2+) is required as a cofactor.

The protein resides in the cytoplasm. An essential GTPase which binds GTP, GDP and possibly (p)ppGpp with moderate affinity, with high nucleotide exchange rates and a fairly low GTP hydrolysis rate. Plays a role in control of the cell cycle, stress response, ribosome biogenesis and in those bacteria that undergo differentiation, in morphogenesis control. This chain is GTPase Obg, found in Nitrosomonas europaea (strain ATCC 19718 / CIP 103999 / KCTC 2705 / NBRC 14298).